Here is a 354-residue protein sequence, read N- to C-terminus: GRAM domain-containing protein 2A (354 aa).

A compositionally biased stretch (polar residues) spans 1–29 (MTALSRSEATEEGGNQQMHRKTASLNSPV). Positions 1–46 (MTALSRSEATEEGGNQQMHRKTASLNSPVSCKEKPDRVEEPPDYSL) are disordered. Residues 31–40 (CKEKPDRVEE) are compositionally biased toward basic and acidic residues. Positions 72-139 (QQYHKLFKDV…VSVQMIKKHK (68 aa)) constitute a GRAM domain. The chain crosses the membrane as a helical span at residues 312-332 (LLKVFFVLICFLVMSSSYLAF).

The protein resides in the endoplasmic reticulum membrane. The protein localises to the cell membrane. Functionally, participates in the organization of endoplasmic reticulum-plasma membrane contact sites (EPCS) with pleiotropic functions including STIM1 recruitment and calcium homeostasis. Constitutive tether that co-localize with ESYT2/3 tethers at endoplasmic reticulum-plasma membrane contact sites in a phosphatidylinositol lipid-dependent manner. Pre-marks the subset of phosphtidylinositol 4,5-biphosphate (PI(4,5)P2)-enriched EPCS destined for the store operated calcium entry pathway (SOCE). This Homo sapiens (Human) protein is GRAM domain-containing protein 2A.